Reading from the N-terminus, the 208-residue chain is Imidazoleglycerol-phosphate dehydratase (208 aa).

The protein belongs to the imidazoleglycerol-phosphate dehydratase family.

The protein resides in the cytoplasm. The enzyme catalyses D-erythro-1-(imidazol-4-yl)glycerol 3-phosphate = 3-(imidazol-4-yl)-2-oxopropyl phosphate + H2O. It functions in the pathway amino-acid biosynthesis; L-histidine biosynthesis; L-histidine from 5-phospho-alpha-D-ribose 1-diphosphate: step 6/9. The protein is Imidazoleglycerol-phosphate dehydratase of Anaeromyxobacter dehalogenans (strain 2CP-1 / ATCC BAA-258).